A 545-amino-acid chain; its full sequence is G-protein coupled receptor 161 (545 aa).

Over 1 to 46 (MDFVQHALLTASRGALTMSLNSSLSYRKELSNLTATEGGEGGAVSE) the chain is Extracellular. 2 N-linked (GlcNAc...) asparagine glycosylation sites follow: Asn21 and Asn32. Residues 47–67 (FIAIIIITVLVCLGNLVIVVT) form a helical membrane-spanning segment. The Cytoplasmic segment spans residues 68–80 (LYKKSYLLTLSNK). A helical transmembrane segment spans residues 81–101 (FVFSLTLSNFLLSVLVLPFVV). Over 102–117 (TSSIRREWIFGVVWCN) the chain is Extracellular. The cysteines at positions 116 and 194 are disulfide-linked. An N-linked (GlcNAc...) asparagine glycan is attached at Asn117. The chain crosses the membrane as a helical span at residues 118 to 139 (FSALLYLLISSASMLTLGVIAI). Over 140-159 (DRYYAVLYPMVYPMKITGNR) the chain is Cytoplasmic. A helical transmembrane segment spans residues 160 to 180 (AVMALVYIWLHSLIGCLPPLF). Residues 181–205 (GWSSVEFDEFKWMCVAAWHQEPGYT) are Extracellular-facing. Residues 206–226 (IFWQIWCALFPFLIMLVCYGF) traverse the membrane as a helical segment. Over 227-285 (IFRVARVKARKVHCGTVVTVEEDSQRSGRKNSSTSTSSSGSRRNALQGVVYSANQCKAL) the chain is Cytoplasmic. Residues 286–306 (ITILVVIGAFMVTWGPYMVVI) traverse the membrane as a helical segment. Topologically, residues 307 to 322 (TSEALWGKNCVSPTLE) are extracellular. A helical transmembrane segment spans residues 323–343 (TWATWLSFTSAICHPLIYGLW). The Cytoplasmic portion of the chain corresponds to 344-545 (NKTVRKELLG…EGNVLAAEQR (202 aa)).

This sequence belongs to the G-protein coupled receptor 1 family.

The protein resides in the cell projection. Its subcellular location is the cilium membrane. It localises to the cell membrane. In terms of biological role, key negative regulator of Shh signaling, which promotes the processing of GLI3 into GLI3R during neural tube development. Recruited by TULP3 and the IFT-A complex to primary cilia and acts as a regulator of the PKA-dependent basal repression machinery in Shh signaling by increasing cAMP levels, leading to promote the PKA-dependent processing of GLI3 into GLI3R and repress the Shh signaling. In presence of SHH, it is removed from primary cilia and is internalized into recycling endosomes, preventing its activity and allowing activation of the Shh signaling. Its ligand is unknown. This Mus musculus (Mouse) protein is G-protein coupled receptor 161 (Gpr161).